The sequence spans 240 residues: Lectin (240 aa).

The Mn(2+) site is built by Glu-127 and Asp-129. Residues Asp-129, Tyr-131, Asn-133, and Asp-138 each contribute to the Ca(2+) site. 2 residues coordinate Mn(2+): Asp-138 and His-143.

It belongs to the leguminous lectin family. As to quaternary structure, heterotetramer of two alpha and two beta chains; disulfide bond linked.

Binds preferentially to oligosaccharides bearing the sequence Man-alpha-1-&gt;2 Man-alpha-1-&gt;6 Man-alpha-1-&gt;6Man found in early steps of glycoprotein processing in the endoplasmic reticulum. It binds weakly to highly processed oligosaccharide structures. In Leucomphalos mildbraedii (Bowringia mildbraedii), this protein is Lectin.